The chain runs to 202 residues: Small ribosomal subunit protein uS4c (202 aa).

Positions 90-151 (MRLDNTIFRL…KQKSRFIITK (62 aa)) constitute an S4 RNA-binding domain.

Belongs to the universal ribosomal protein uS4 family. In terms of assembly, part of the 30S ribosomal subunit. Contacts protein S5. The interaction surface between S4 and S5 is involved in control of translational fidelity.

Its subcellular location is the plastid. The protein resides in the chloroplast. Its function is as follows. One of the primary rRNA binding proteins, it binds directly to 16S rRNA where it nucleates assembly of the body of the 30S subunit. Functionally, with S5 and S12 plays an important role in translational accuracy. This is Small ribosomal subunit protein uS4c (rps4) from Plagiochila adianthoides (Liverwort).